The following is a 586-amino-acid chain: 3-hydroxy-3-methylglutaryl-coenzyme A reductase 3 (586 aa).

The next 2 helical transmembrane spans lie at 36–59 and 87–107; these read PSDY…FFSV and ALIC…IGFV. Positions 108–170 are linker; sequence HSFSRASTDS…STTTTSTLSD (63 aa). 2 catalytic regions span residues 171-586 and 172-586; these read DDEQ…KITF and DEQI…KITF. Catalysis depends on charge relay system residues Glu265, Lys397, and Asp473. His571 functions as the Proton donor in the catalytic mechanism. The N-linked (GlcNAc...) asparagine glycan is linked to Asn575.

It belongs to the HMG-CoA reductase family.

The protein localises to the endoplasmic reticulum membrane. The protein resides in the mitochondrion membrane. Its subcellular location is the plastid membrane. It carries out the reaction (R)-mevalonate + 2 NADP(+) + CoA = (3S)-3-hydroxy-3-methylglutaryl-CoA + 2 NADPH + 2 H(+). It functions in the pathway metabolic intermediate biosynthesis; (R)-mevalonate biosynthesis; (R)-mevalonate from acetyl-CoA: step 3/3. Functionally, catalyzes the synthesis of mevalonate. The specific precursor of all isoprenoid compounds present in plants. This is 3-hydroxy-3-methylglutaryl-coenzyme A reductase 3 (HMGR3) from Hevea brasiliensis (Para rubber tree).